Here is a 463-residue protein sequence, read N- to C-terminus: Cytochrome c-552 (463 aa).

Positions 1 to 23 (MNVKSIALSAVIATSFLAAGAMA) are cleaved as a signal peptide. Residue histidine 83 participates in heme c binding. Heme contacts are provided by cysteine 111, cysteine 114, and lysine 115. Cysteine 149, cysteine 152, histidine 153, cysteine 191, cysteine 194, and histidine 195 together coordinate heme c. 4 residues coordinate Ca(2+): glutamate 197, tyrosine 198, lysine 246, and glutamine 248. Tyrosine 198 lines the substrate pocket. Substrate is bound at residue histidine 249. Heme c contacts are provided by histidine 260, cysteine 267, cysteine 270, histidine 271, histidine 286, cysteine 299, cysteine 302, histidine 303, and histidine 378.

Belongs to the cytochrome c-552 family. Requires Ca(2+) as cofactor. Heme c serves as cofactor.

The protein localises to the periplasm. It carries out the reaction 6 Fe(III)-[cytochrome c] + NH4(+) + 2 H2O = 6 Fe(II)-[cytochrome c] + nitrite + 8 H(+). The protein operates within nitrogen metabolism; nitrate reduction (assimilation). Functionally, catalyzes the reduction of nitrite to ammonia, consuming six electrons in the process. This is Cytochrome c-552 from Shewanella frigidimarina (strain NCIMB 400).